The sequence spans 504 residues: Anaerobic nitric oxide reductase transcription regulator NorR (504 aa).

Position 57 is a 4-aspartylphosphate (aspartate 57). Residues 187 to 416 (MIGLSPGMTQ…LEHAIHRAVV (230 aa)) enclose the Sigma-54 factor interaction domain. ATP is bound by residues 215-222 (GETGTGKE) and 278-287 (ADNGTLFLDE). Positions 479 to 498 (WAACARMLETDVANLHRLAK) form a DNA-binding region, H-T-H motif.

Its pathway is nitrogen metabolism; nitric oxide reduction. Functionally, required for the expression of anaerobic nitric oxide (NO) reductase, acts as a transcriptional activator for at least the norVW operon. Activation also requires sigma-54. The protein is Anaerobic nitric oxide reductase transcription regulator NorR of Escherichia coli (strain SE11).